Here is a 464-residue protein sequence, read N- to C-terminus: Chitobiosyldiphosphodolichol beta-mannosyltransferase (464 aa).

The Lumenal segment spans residues 1 to 2 (MA). Residues 3–23 (ASCLVLLALCLLLPLLLLGGW) form a helical membrane-spanning segment. Residues 24–99 (KRWRRGRTAR…ELQSLAVGPR (76 aa)) lie on the Cytoplasmic side of the membrane. An intramembrane region (helical) is located at residues 100 to 120 (VFQYGVKVVFQAMYLLWKLMW). The Cytoplasmic segment spans residues 121–464 (REPGAYIFLQ…QTVLPLVMDT (344 aa)). A Phosphoserine modification is found at S242. The interval 242–261 (SPFRARSEPEDPATERSAFT) is disordered.

It belongs to the glycosyltransferase group 1 family. Glycosyltransferase 33 subfamily.

It is found in the endoplasmic reticulum membrane. The enzyme catalyses an N,N'-diacetylchitobiosyl-diphospho-di-trans,poly-cis-dolichol + GDP-alpha-D-mannose = a beta-D-Man-(1-&gt;4)-beta-D-GlcNAc-(1-&gt;4)-alpha-D-GlcNAc-diphospho-di-trans,poly-cis-dolichol + GDP + H(+). It functions in the pathway protein modification; protein glycosylation. Functionally, mannosyltransferase that operates in the biosynthetic pathway of dolichol-linked oligosaccharides, the glycan precursors employed in protein asparagine (N)-glycosylation. The assembly of dolichol-linked oligosaccharides begins on the cytosolic side of the endoplasmic reticulum membrane and finishes in its lumen. The sequential addition of sugars to dolichol pyrophosphate produces dolichol-linked oligosaccharides containing fourteen sugars, including two GlcNAcs, nine mannoses and three glucoses. Once assembled, the oligosaccharide is transferred from the lipid to nascent proteins by oligosaccharyltransferases. Catalyzes, on the cytoplasmic face of the endoplasmic reticulum, the addition of the first mannose residues to the dolichol-linked oligosaccharide chain, to produce Man1GlcNAc(2)-PP-dolichol core oligosaccharide. Man1GlcNAc(2)-PP-dolichol is a substrate for ALG2, the following enzyme in the biosynthetic pathway. The sequence is that of Chitobiosyldiphosphodolichol beta-mannosyltransferase from Pongo abelii (Sumatran orangutan).